An 86-amino-acid polypeptide reads, in one-letter code: Small ribosomal subunit protein bS20 (86 aa).

The protein belongs to the bacterial ribosomal protein bS20 family.

Binds directly to 16S ribosomal RNA. The protein is Small ribosomal subunit protein bS20 of Buchnera aphidicola subsp. Cinara cedri (strain Cc).